The primary structure comprises 313 residues: 3'-5' exoribonuclease YhaM (313 aa).

The region spanning 163-279 (HVVSMLRLAK…LHQIDLMDAS (117 aa)) is the HD domain.

The protein belongs to the YhaM family.

Shows a 3'-5' exoribonuclease activity. The sequence is that of 3'-5' exoribonuclease YhaM from Listeria monocytogenes serotype 4b (strain CLIP80459).